Consider the following 551-residue polypeptide: RanBD1 domain-containing protein C584.03c (551 aa).

Residues 1–309 enclose the RanBD1 domain; that stretch reads MDELLNVASH…LLLKYADDET (309 aa). Ser441 is subject to Phosphoserine. The disordered stretch occupies residues 522-551; that stretch reads SVIPHSEPESSSKVINCQAKLNVEKEKKNP.

It localises to the nucleus. This chain is RanBD1 domain-containing protein C584.03c, found in Schizosaccharomyces pombe (strain 972 / ATCC 24843) (Fission yeast).